The following is a 148-amino-acid chain: uncharacterized protein (148 aa).

The disordered stretch occupies residues 1-108 (MGRAGPRSTA…PSRLRGKRSL (108 aa)). Positions 22-42 (RRPRPWQKPTSPRRLHRRRPR) are enriched in basic residues. The span at 88 to 97 (DTSASNPSQR) shows a compositional bias: polar residues.

This is an uncharacterized protein from Homo sapiens (Human).